Here is a 349-residue protein sequence, read N- to C-terminus: Increased DNA methylation 2 (349 aa).

Residues 210–230 form a disordered region; the sequence is EDNAGTCTSGEESDVAAKPEV. Residues 233 to 349 enclose the sHSP domain; sequence EAHGGLMVGL…VMKNLQKQTV (117 aa).

The protein belongs to the small heat shock protein (HSP20) family. In terms of assembly, homodimer or oligomer. May form an 16-mer complex. Interacts with MBD7 (via C-terminus). Interacts with IDM1 (via N-terminus). Interacts with IMD3. Part of a complex made of MBD7, IDM1, IDM2, IDM3 and ROS1. As to expression, expressed in cotyledons and hypocotyls in young seedlings.

Its subcellular location is the nucleus. It is found in the nucleoplasm. In terms of biological role, prevents DNA hypermethylation and transcriptional silencing of transgenes and of some endogenous genes. May act as a molecular chaperone of IDM1, regulating its H3K18 acetylation activity. The sequence is that of Increased DNA methylation 2 from Arabidopsis thaliana (Mouse-ear cress).